Reading from the N-terminus, the 295-residue chain is Ankyrin repeat and SOCS box protein 17 (295 aa).

The stretch at 146 to 176 (SGITPLLYVAQTRQSNILKILLQYGILEREK) is one ANK repeat. The 64-residue stretch at 232–295 (LGRRPIISNW…RLQKYLNLES (64 aa)) folds into the SOCS box domain.

This sequence belongs to the ankyrin SOCS box (ASB) family.

It participates in protein modification; protein ubiquitination. Its function is as follows. May be a substrate-recognition component of a SCF-like ECS (Elongin-Cullin-SOCS-box protein) E3 ubiquitin-protein ligase complex which mediates the ubiquitination and subsequent proteasomal degradation of target proteins. In Canis lupus familiaris (Dog), this protein is Ankyrin repeat and SOCS box protein 17 (ASB17).